A 375-amino-acid polypeptide reads, in one-letter code: Phospho-N-acetylmuramoyl-pentapeptide-transferase (375 aa).

The next 10 helical transmembrane spans lie at 2-22 (IGLL…TPLF), 55-75 (AVII…LAVL), 82-102 (PTAS…VGFV), 120-140 (GKII…LNFP), 158-178 (IPWL…FVIW), 198-218 (GLAT…SLFQ), 237-257 (PMDL…FLWW), 264-284 (IFMG…FAIF), 289-309 (ILVA…IIQV), and 345-365 (WLLS…DWLI).

It belongs to the glycosyltransferase 4 family. MraY subfamily. Mg(2+) serves as cofactor.

The protein resides in the cell membrane. It catalyses the reaction UDP-N-acetyl-alpha-D-muramoyl-L-alanyl-gamma-D-glutamyl-meso-2,6-diaminopimeloyl-D-alanyl-D-alanine + di-trans,octa-cis-undecaprenyl phosphate = di-trans,octa-cis-undecaprenyl diphospho-N-acetyl-alpha-D-muramoyl-L-alanyl-D-glutamyl-meso-2,6-diaminopimeloyl-D-alanyl-D-alanine + UMP. It functions in the pathway cell wall biogenesis; peptidoglycan biosynthesis. Catalyzes the initial step of the lipid cycle reactions in the biosynthesis of the cell wall peptidoglycan: transfers peptidoglycan precursor phospho-MurNAc-pentapeptide from UDP-MurNAc-pentapeptide onto the lipid carrier undecaprenyl phosphate, yielding undecaprenyl-pyrophosphoryl-MurNAc-pentapeptide, known as lipid I. This Micrococcus luteus (strain ATCC 4698 / DSM 20030 / JCM 1464 / CCM 169 / CCUG 5858 / IAM 1056 / NBRC 3333 / NCIMB 9278 / NCTC 2665 / VKM Ac-2230) (Micrococcus lysodeikticus) protein is Phospho-N-acetylmuramoyl-pentapeptide-transferase.